Consider the following 166-residue polypeptide: Regulatory protein RecX (166 aa).

It belongs to the RecX family.

It localises to the cytoplasm. In terms of biological role, modulates RecA activity. In Salmonella paratyphi C (strain RKS4594), this protein is Regulatory protein RecX.